Here is a 349-residue protein sequence, read N- to C-terminus: D-arabinose 1-dehydrogenase (NADP(+)) (349 aa).

The Zn(2+) site is built by Cys-46, His-70, Asp-99, Cys-102, Cys-105, Cys-113, and Asp-155.

The protein belongs to the zinc-containing alcohol dehydrogenase family. As to quaternary structure, homotetramer. Dimer of dimers. It depends on Zn(2+) as a cofactor.

The catalysed reaction is D-arabinose + NADP(+) = D-arabinono-1,4-lactone + NADPH + H(+). Participates in a pentose oxidation pathway that converts D-arabinose to 2-oxoglutarate. Catalyzes the NADP-dependent conversion of D-arabinose to D-arabinono-1,4-lactone. In vitro, can also use L-fucose, L-galactose and D-ribose. Shows highest activity with L-fucose, in combinaison with NAD, and lower activity toward L-galactose and D-ribose. When acting on its physiological substrate, D-arabinose, shows a clear preference for NADP over NAD. The sequence is that of D-arabinose 1-dehydrogenase (NADP(+)) from Saccharolobus solfataricus (strain ATCC 35092 / DSM 1617 / JCM 11322 / P2) (Sulfolobus solfataricus).